A 502-amino-acid chain; its full sequence is Lysine--tRNA ligase (502 aa).

Residues 1-22 form a disordered region; that stretch reads MSDHEQAQAQSQDENQIMAERR. Residues glutamate 413 and glutamate 420 each contribute to the Mg(2+) site.

The protein belongs to the class-II aminoacyl-tRNA synthetase family. As to quaternary structure, homodimer. Mg(2+) is required as a cofactor.

The protein resides in the cytoplasm. The enzyme catalyses tRNA(Lys) + L-lysine + ATP = L-lysyl-tRNA(Lys) + AMP + diphosphate. The protein is Lysine--tRNA ligase of Chromobacterium violaceum (strain ATCC 12472 / DSM 30191 / JCM 1249 / CCUG 213 / NBRC 12614 / NCIMB 9131 / NCTC 9757 / MK).